The primary structure comprises 237 residues: Lipid A 1-diphosphate synthase (237 aa).

Over Met1–Leu5 the chain is Cytoplasmic. A helical membrane pass occupies residues Pro6 to Val26. Over Asn27–Arg62 the chain is Periplasmic. A helical membrane pass occupies residues Ala63 to Glu83. Residues Asn84–Arg90 are Cytoplasmic-facing. Residues Ile91–Ala111 form a helical membrane-spanning segment. At Leu112–Ser145 the chain is on the periplasmic side. Position 167 (Lys167) is a topological domain, cytoplasmic. A helical membrane pass occupies residues Val168–Gly188. Over Ala189–Asp194 the chain is Periplasmic. The helical transmembrane segment at Ile195–Leu215 threads the bilayer. At Ser216–Lys237 the chain is on the cytoplasmic side.

The protein belongs to the LpxT phosphotransferase family.

It localises to the cell inner membrane. The enzyme catalyses di-trans,octa-cis-undecaprenyl diphosphate + alpha-Kdo-(2-&gt;4)-alpha-Kdo-(2-&gt;6)-lipid A (E. coli) = (Kdo)2-lipid A 1-diphosphate + di-trans,octa-cis-undecaprenyl phosphate. It participates in bacterial outer membrane biogenesis; lipopolysaccharide biosynthesis. Its activity is regulated as follows. Inhibited by BasR. This regulation does not occur at the level of transcription, but rather following the assembly of LpxT into the inner membrane. Functionally, involved in the modification of the lipid A domain of lipopolysaccharides (LPS). Transfers a phosphate group from undecaprenyl pyrophosphate (C55-PP) to lipid A to form lipid A 1-diphosphate. Contributes to the recycling of undecaprenyl phosphate (C55-P). In vitro, has low undecaprenyl-diphosphate phosphatase activity. In Escherichia coli (strain K12), this protein is Lipid A 1-diphosphate synthase.